The chain runs to 1135 residues: Receptor-type guanylate cyclase gcy-4 (1135 aa).

An N-terminal signal peptide occupies residues 1 to 20 (MTQLLRFLLILSIFCDFSHS). Topologically, residues 21–483 (QRPTIRVGIA…CPIPFFDQYR (463 aa)) are extracellular. 9 N-linked (GlcNAc...) asparagine glycosylation sites follow: Asn-37, Asn-193, Asn-209, Asn-251, Asn-349, Asn-375, Asn-431, Asn-436, and Asn-447. The helical transmembrane segment at 484-504 (LLIFVFVIVAGLLILAIFTCL) threads the bilayer. At 505-1135 (TSMVRNQRAE…VMRREMMRVS (631 aa)) the chain is on the cytoplasmic side. Residues 535 to 560 (KGRRLSTDSENSTVTKSSKGSSSKNF) are disordered. A Protein kinase domain is found at 545-837 (NSTVTKSSKG…KDNLMDHVFS (293 aa)). Residues 546-560 (STVTKSSKGSSSKNF) are compositionally biased toward low complexity. In terms of domain architecture, Guanylate cyclase spans 895–1025 (TVFFSDLVKF…DTVNTASRME (131 aa)).

This sequence belongs to the adenylyl cyclase class-4/guanylyl cyclase family. As to expression, expressed bilaterally in ASE neurons.

The protein resides in the cell membrane. The enzyme catalyses GTP = 3',5'-cyclic GMP + diphosphate. Its function is as follows. Guanylate cyclase involved in the production of the second messenger cGMP. Regulates chemotaxis responses toward salt ions in ASE sensory neurons. The chain is Receptor-type guanylate cyclase gcy-4 from Caenorhabditis briggsae.